The chain runs to 844 residues: Translation elongation factor 2 (844 aa).

Residues 17–348 (RNIRNMSVIA…MIAIHLPSPV (332 aa)) form the tr-type G domain. Position 26 to 33 (26 to 33 (AHVDHGKS)) interacts with GTP. Residues threonine 57 and threonine 59 each carry the phosphothreonine modification. Residues 162 to 165 (NKMD) and 219 to 221 (SGL) contribute to the GTP site. Serine 488 bears the Phosphoserine mark. The residue at position 701 (histidine 701) is a Diphthamide.

This sequence belongs to the TRAFAC class translation factor GTPase superfamily. Classic translation factor GTPase family. EF-G/EF-2 subfamily. Phosphorylation by EF-2 kinase completely inactivates EF-2.

Its subcellular location is the cytoplasm. It carries out the reaction GTP + H2O = GDP + phosphate + H(+). Its function is as follows. Catalyzes the GTP-dependent ribosomal translocation step during translation elongation. During this step, the ribosome changes from the pre-translocational (PRE) to the post-translocational (POST) state as the newly formed A-site-bound peptidyl-tRNA and P-site-bound deacylated tRNA move to the P and E sites, respectively. Catalyzes the coordinated movement of the two tRNA molecules, the mRNA and conformational changes in the ribosome. This chain is Translation elongation factor 2, found in Bombyx mori (Silk moth).